The following is a 127-amino-acid chain: Fluoride-specific ion channel FluC (127 aa).

A run of 4 helical transmembrane segments spans residues 6 to 26 (LAIS…GLGF), 37 to 57 (TLLA…FFAA), 67 to 87 (LLVI…SAEV), and 96 to 116 (LLWA…MTLL). Gly-75 and Thr-78 together coordinate Na(+).

The protein belongs to the fluoride channel Fluc/FEX (TC 1.A.43) family.

Its subcellular location is the cell inner membrane. The enzyme catalyses fluoride(in) = fluoride(out). With respect to regulation, na(+) is not transported, but it plays an essential structural role and its presence is essential for fluoride channel function. Functionally, fluoride-specific ion channel. Important for reducing fluoride concentration in the cell, thus reducing its toxicity. In Tolumonas auensis (strain DSM 9187 / NBRC 110442 / TA 4), this protein is Fluoride-specific ion channel FluC.